Consider the following 370-residue polypeptide: MKLCATSSEPARAAWPLSEPALAYFPDARSASDRDLAAGAYSPGVAMEHIPVLLDRCVELLTPALTRRNPDGRGAVLVDATLGAGGHAHRFLSDLPGLHLIGLDRDPQALQIAGERLAPFGDRVSLVRTRYDGIDDALAQTGVAEVSGFLFDLGVSSMQLDRTERGFSYSADAPLDMRMDSDAPLTAADVVNTFAEKDITRILREFGEERFAARIAKHIVRRRPLNTTGELVELLYDAIPAPARRTGGHPAKRTFQALRIAVNSELDSLRAAVPAALAALETGGRIVVMAYQSLEDRIVKTEFAAATASRTPPGLPVELPGHEPEFVALTRGAERATPEEIERNPRSAPVRLRALEKVAGRPTTARRDAR.

Residues 85-87, Asp-104, Tyr-131, Asp-152, and Gln-159 contribute to the S-adenosyl-L-methionine site; that span reads GGH. Basic and acidic residues-rich tracts occupy residues 332–345 and 353–370; these read GAER…ERNP and RALE…RDAR. Residues 332–370 form a disordered region; sequence GAERATPEEIERNPRSAPVRLRALEKVAGRPTTARRDAR.

It belongs to the methyltransferase superfamily. RsmH family.

Its subcellular location is the cytoplasm. The catalysed reaction is cytidine(1402) in 16S rRNA + S-adenosyl-L-methionine = N(4)-methylcytidine(1402) in 16S rRNA + S-adenosyl-L-homocysteine + H(+). In terms of biological role, specifically methylates the N4 position of cytidine in position 1402 (C1402) of 16S rRNA. In Mycobacterium sp. (strain KMS), this protein is Ribosomal RNA small subunit methyltransferase H.